The following is a 552-amino-acid chain: Membrane protein insertase YidC (552 aa).

The next 5 membrane-spanning stretches (helical) occupy residues 7-24 (VLWV…DNWQ), 364-384 (WGWA…PLSA), 434-454 (LPVV…LASV), 473-493 (PFFI…SLNP), and 508-528 (PIAF…YYVV).

This sequence belongs to the OXA1/ALB3/YidC family. Type 1 subfamily. In terms of assembly, interacts with the Sec translocase complex via SecD. Specifically interacts with transmembrane segments of nascent integral membrane proteins during membrane integration.

The protein localises to the cell inner membrane. In terms of biological role, required for the insertion and/or proper folding and/or complex formation of integral membrane proteins into the membrane. Involved in integration of membrane proteins that insert both dependently and independently of the Sec translocase complex, as well as at least some lipoproteins. Aids folding of multispanning membrane proteins. The sequence is that of Membrane protein insertase YidC from Burkholderia cenocepacia (strain ATCC BAA-245 / DSM 16553 / LMG 16656 / NCTC 13227 / J2315 / CF5610) (Burkholderia cepacia (strain J2315)).